A 406-amino-acid polypeptide reads, in one-letter code: Tryptophan synthase beta chain (406 aa).

Position 99 is an N6-(pyridoxal phosphate)lysine (Lys99).

Belongs to the TrpB family. As to quaternary structure, tetramer of two alpha and two beta chains. Pyridoxal 5'-phosphate is required as a cofactor.

The enzyme catalyses (1S,2R)-1-C-(indol-3-yl)glycerol 3-phosphate + L-serine = D-glyceraldehyde 3-phosphate + L-tryptophan + H2O. The protein operates within amino-acid biosynthesis; L-tryptophan biosynthesis; L-tryptophan from chorismate: step 5/5. In terms of biological role, the beta subunit is responsible for the synthesis of L-tryptophan from indole and L-serine. The sequence is that of Tryptophan synthase beta chain from Methylobacterium nodulans (strain LMG 21967 / CNCM I-2342 / ORS 2060).